A 141-amino-acid polypeptide reads, in one-letter code: Cytochrome c-type biogenesis protein CcmE (141 aa).

Residues 1 to 7 (MQRKHKR) are Cytoplasmic-facing. The helical; Signal-anchor for type II membrane protein transmembrane segment at 8 to 28 (ILFVAVSFIALGCVSAFVLFE) threads the bilayer. Residues 29-141 (LSKSISFFCT…SSDAAVIGSS (113 aa)) lie on the Periplasmic side of the membrane. The heme site is built by His-121 and Tyr-125.

The protein belongs to the CcmE/CycJ family.

The protein localises to the cell inner membrane. In terms of biological role, heme chaperone required for the biogenesis of c-type cytochromes. Transiently binds heme delivered by CcmC and transfers the heme to apo-cytochromes in a process facilitated by CcmF and CcmH. The protein is Cytochrome c-type biogenesis protein CcmE of Anaplasma phagocytophilum (strain HZ).